A 466-amino-acid chain; its full sequence is Soluble pyridine nucleotide transhydrogenase (466 aa).

Position 36 to 45 (36 to 45 (ERYQNVGGGC)) interacts with FAD.

It belongs to the class-I pyridine nucleotide-disulfide oxidoreductase family. FAD serves as cofactor.

It is found in the cytoplasm. It carries out the reaction NAD(+) + NADPH = NADH + NADP(+). Functionally, conversion of NADPH, generated by peripheral catabolic pathways, to NADH, which can enter the respiratory chain for energy generation. The protein is Soluble pyridine nucleotide transhydrogenase of Escherichia coli O81 (strain ED1a).